Here is a 152-residue protein sequence, read N- to C-terminus: MGVVFAFGFYLIFIKLTGLKLMDYFPRFKENRLKMIFSILSVILAFLINWLIMKNFSFLIEIIHPIASVWIFIILIYLLLRFLFLKRVPLSNYEKKFMGNMSAIAIFLELLKIIEYVDEHNIASPITVALVFFIPVVVFFNCKYFYEMELSS.

Helical transmembrane passes span 2–22 (GVVF…LKLM), 33–53 (LKMI…WLIM), 58–78 (FLIE…LIYL), 97–117 (FMGN…IEYV), and 122–142 (IASP…FFNC).

It localises to the cell membrane. This is an uncharacterized protein from Methanocaldococcus jannaschii (strain ATCC 43067 / DSM 2661 / JAL-1 / JCM 10045 / NBRC 100440) (Methanococcus jannaschii).